A 380-amino-acid chain; its full sequence is Putative S-(hydroxymethyl)glutathione dehydrogenase 2 (380 aa).

Cys50 contributes to the Zn(2+) binding site. His51 is a binding site for NAD(+). Zn(2+) contacts are provided by His72, Glu73, Cys102, Cys105, Cys108, Cys116, and Cys179. Residues 204-209 (GLGSVG), Asp228, and 297-299 (IGV) each bind NAD(+).

The protein belongs to the zinc-containing alcohol dehydrogenase family. Class-III subfamily. Zn(2+) is required as a cofactor.

It carries out the reaction a primary alcohol + NAD(+) = an aldehyde + NADH + H(+). The catalysed reaction is a secondary alcohol + NAD(+) = a ketone + NADH + H(+). The enzyme catalyses S-(hydroxymethyl)glutathione + NADP(+) = S-formylglutathione + NADPH + H(+). It catalyses the reaction S-(hydroxymethyl)glutathione + NAD(+) = S-formylglutathione + NADH + H(+). It carries out the reaction S-nitrosoglutathione + NADH + H(+) = S-(hydroxysulfenamide)glutathione + NAD(+). In terms of biological role, oxidizes long-chain alcohols and, in the presence of glutathione, is able to oxidize formaldehyde. Also acts as a S-nitroso-glutathione reductase by catalyzing the NADH-dependent reduction of S-nitrosoglutathione, thereby regulating protein S-nitrosylation. This Schizosaccharomyces pombe (strain 972 / ATCC 24843) (Fission yeast) protein is Putative S-(hydroxymethyl)glutathione dehydrogenase 2.